The primary structure comprises 331 residues: MGAPNDTVIFLRRGKIERREDAFRIGKSKYSAVRTTGIIIAGGAQITTQAVRLALRNEVPIVYLGGNRILGVTVPFSERYATLRLKQYEIASQPSARLAFARPLIASSILARAAVLEFLANETGITGLEDAADEVRSEAERALNAGSTDALRGYEGRAACRYFRALAEVLPDWAFSGRRTRRPPRDPFNAAISFGYAGVLLPVLLSRTVAAGLEPFLGFLHGPRGRRPGLILDLMEEWRALAVDVPVLRRFLDGSLSREMFRWKGDAVLLRDLDAVSAPVLTVLSRVRGGLLEAVDRRIREVRDGVSRQSPPEPLEFDPEDVGVVWDALEV.

Residues Glu-155, His-221, and Glu-236 each contribute to the Mn(2+) site.

It belongs to the CRISPR-associated endonuclease Cas1 family. Homodimer, forms a heterotetramer with a Cas2 homodimer. It depends on Mg(2+) as a cofactor. Mn(2+) serves as cofactor.

Functionally, CRISPR (clustered regularly interspaced short palindromic repeat), is an adaptive immune system that provides protection against mobile genetic elements (viruses, transposable elements and conjugative plasmids). CRISPR clusters contain spacers, sequences complementary to antecedent mobile elements, and target invading nucleic acids. CRISPR clusters are transcribed and processed into CRISPR RNA (crRNA). Acts as a dsDNA endonuclease. Involved in the integration of spacer DNA into the CRISPR cassette. This chain is CRISPR-associated endonuclease Cas1, found in Methanopyrus kandleri (strain AV19 / DSM 6324 / JCM 9639 / NBRC 100938).